Here is a 440-residue protein sequence, read N- to C-terminus: Serine hydroxymethyltransferase (440 aa).

(6S)-5,6,7,8-tetrahydrofolate is bound by residues leucine 119 and 123–125 (GHL). Residue lysine 228 is modified to N6-(pyridoxal phosphate)lysine. 370–372 (SPF) serves as a coordination point for (6S)-5,6,7,8-tetrahydrofolate.

It belongs to the SHMT family. As to quaternary structure, homodimer. Requires pyridoxal 5'-phosphate as cofactor.

The protein localises to the cytoplasm. The catalysed reaction is (6R)-5,10-methylene-5,6,7,8-tetrahydrofolate + glycine + H2O = (6S)-5,6,7,8-tetrahydrofolate + L-serine. The protein operates within one-carbon metabolism; tetrahydrofolate interconversion. It participates in amino-acid biosynthesis; glycine biosynthesis; glycine from L-serine: step 1/1. Functionally, catalyzes the reversible interconversion of serine and glycine with tetrahydrofolate (THF) serving as the one-carbon carrier. This reaction serves as the major source of one-carbon groups required for the biosynthesis of purines, thymidylate, methionine, and other important biomolecules. Also exhibits THF-independent aldolase activity toward beta-hydroxyamino acids, producing glycine and aldehydes, via a retro-aldol mechanism. The polypeptide is Serine hydroxymethyltransferase (Chlorobaculum tepidum (strain ATCC 49652 / DSM 12025 / NBRC 103806 / TLS) (Chlorobium tepidum)).